Consider the following 187-residue polypeptide: dCTP deaminase (187 aa).

Residues 107–112, 131–133, glutamine 152, tyrosine 166, lysine 175, and glutamine 176 contribute to the dCTP site; these read KSTYAR and TLE. Glutamate 133 (proton donor/acceptor) is an active-site residue.

The protein belongs to the dCTP deaminase family. In terms of assembly, homotrimer.

The catalysed reaction is dCTP + H2O + H(+) = dUTP + NH4(+). The protein operates within pyrimidine metabolism; dUMP biosynthesis; dUMP from dCTP (dUTP route): step 1/2. Catalyzes the deamination of dCTP to dUTP. In Ehrlichia canis (strain Jake), this protein is dCTP deaminase.